Consider the following 72-residue polypeptide: ATP synthase protein 8 (72 aa).

A helical transmembrane segment spans residues tryptophan 16 to valine 36.

This sequence belongs to the ATPase protein 8 family. In terms of assembly, F-type ATPases have 2 components, CF(1) - the catalytic core - and CF(0) - the membrane proton channel.

It is found in the mitochondrion membrane. In terms of biological role, mitochondrial membrane ATP synthase (F(1)F(0) ATP synthase or Complex V) produces ATP from ADP in the presence of a proton gradient across the membrane which is generated by electron transport complexes of the respiratory chain. F-type ATPases consist of two structural domains, F(1) - containing the extramembraneous catalytic core and F(0) - containing the membrane proton channel, linked together by a central stalk and a peripheral stalk. During catalysis, ATP synthesis in the catalytic domain of F(1) is coupled via a rotary mechanism of the central stalk subunits to proton translocation. Part of the complex F(0) domain. Minor subunit located with subunit a in the membrane. This is ATP synthase protein 8 (MTATP8) from Metridium senile (Brown sea anemone).